The primary structure comprises 479 residues: MTAKTLYDKLWEMHEVTRRDDGSSLIYIDRHILHEVTSPQAFEGLRLAGRKPWRIDANIATPDHNVPTTRAERQGGLESISDEVSRLQVQTLDENCDDFGILEFKMNDTRQGIVHVVGPEQGATLPGMTVVCGDSHTSTHGAFGALAHGIGTSEVEHVLATQCLIAKKMKNLQVRVEGTLPFGVTAKDIVLAVIGKIGTAGGNGHALEFAGSAIRALSMEGRMTICNMSIEAGARVGMVAVDEKTIAYVKGRPFAPKGADWDAAVALWRTLVSDADASFDTVVELRAEDIKPQVSWGTSPEMVVAIDQQVPDPAAEQDPTKRDSIQRALKYMGLRANQPITEIHLDRVFIGSCTNSRIEDLRAAAAVAKGRKVASTIKQALVVPGSGLVKAQAEAEGLDKIFLDAGFEWREPGCSMCLAMNPDKLGSGEHCASTSNRNFEGRQGAGGRTHLVSPAMAAAAAVSGHFVDVRELQGIETRE.

[4Fe-4S] cluster is bound by residues cysteine 353, cysteine 414, and cysteine 417.

It belongs to the aconitase/IPM isomerase family. LeuC type 1 subfamily. As to quaternary structure, heterodimer of LeuC and LeuD. It depends on [4Fe-4S] cluster as a cofactor.

The catalysed reaction is (2R,3S)-3-isopropylmalate = (2S)-2-isopropylmalate. It participates in amino-acid biosynthesis; L-leucine biosynthesis; L-leucine from 3-methyl-2-oxobutanoate: step 2/4. Catalyzes the isomerization between 2-isopropylmalate and 3-isopropylmalate, via the formation of 2-isopropylmaleate. The protein is 3-isopropylmalate dehydratase large subunit of Xanthomonas campestris pv. campestris (strain 8004).